The following is a 150-amino-acid chain: S-protein homolog 3 (150 aa).

An N-terminal signal peptide occupies residues 1 to 23 (MKNILKTQVHVVVIYLLIKIAFS). N-linked (GlcNAc...) asparagine glycosylation is found at Asn-32 and Asn-70.

It belongs to the plant self-incompatibility (S1) protein family.

The protein resides in the secreted. The protein is S-protein homolog 3 of Arabidopsis thaliana (Mouse-ear cress).